The sequence spans 342 residues: S-adenosylmethionine:tRNA ribosyltransferase-isomerase (342 aa).

This sequence belongs to the QueA family. As to quaternary structure, monomer.

The protein resides in the cytoplasm. The catalysed reaction is 7-aminomethyl-7-carbaguanosine(34) in tRNA + S-adenosyl-L-methionine = epoxyqueuosine(34) in tRNA + adenine + L-methionine + 2 H(+). Its pathway is tRNA modification; tRNA-queuosine biosynthesis. Functionally, transfers and isomerizes the ribose moiety from AdoMet to the 7-aminomethyl group of 7-deazaguanine (preQ1-tRNA) to give epoxyqueuosine (oQ-tRNA). The protein is S-adenosylmethionine:tRNA ribosyltransferase-isomerase of Bacillus licheniformis (strain ATCC 14580 / DSM 13 / JCM 2505 / CCUG 7422 / NBRC 12200 / NCIMB 9375 / NCTC 10341 / NRRL NRS-1264 / Gibson 46).